The chain runs to 7094 residues: Replicase polyprotein 1ab (7094 aa).

The region spanning 54 to 196 (PENHVMVDCR…PWVMYLRKCG (143 aa)) is the CoV Nsp1 globular domain. The region spanning 216 to 246 (FKVEDAYDLVHDEPKGKFSKKAYALIRGYRG) is the BetaCoV Nsp1 C-terminal domain. The CoV Nsp2 N-terminal domain maps to 250-519 (LLYVDQYGCD…LICKALYLDY (270 aa)). Residues Cys392, Cys397, Cys413, and Cys416 each coordinate Zn(2+). The C4 stretch occupies residues 392-416 (CEQDLCDFKGWVPGNMIDGFACTTC). The CoV Nsp2 middle domain occupies 524–713 (CGNLHQRELL…AQAFRSVAKV (190 aa)). A CoV Nsp2 C-terminal domain is found at 733 to 851 (RRRICLSGSK…LDQAWRVPCA (119 aa)). The Ubiquitin-like 1 domain maps to 853–966 (RRVTFKEQPT…LYCAFTAPED (114 aa)). The region spanning 1036–1274 (DLESVIQDYE…IAQLYGSCIT (239 aa)) is the Peptidase C16 1 domain. Cys1074 serves as the catalytic For PL1-PRO activity. 4 residues coordinate Zn(2+): Cys1151, Cys1154, Cys1177, and Cys1179. A C4-type 1 zinc finger spans residues 1151–1179 (CIKCDLALKLKGLDAMFFYGDVVSHVCKC). Active-site for PL1-PRO activity residues include His1225 and Asp1236. The region spanning 1275 to 1435 (PNVCFVKGDI…LISKCQITAV (161 aa)) is the Macro domain. The DPUP domain maps to 1491 to 1563 (DDARTFVQSN…VAQIKALFLD (73 aa)). The Ubiquitin-like 2 domain maps to 1562-1617 (LDKVDILLTVDGVNFTNRFVPVGENFGKSLGNVFCDGVNVTKHKCDINYKGKVFFQ). Residues 1631–1892 (SSFNFDQKEL…KIEYKPDLSQ (262 aa)) enclose the Peptidase C16 2 domain. Cys1671 (for PL2-PRO activity) is an active-site residue. Residues Cys1749, Cys1751, Cys1783, and Cys1785 each coordinate Zn(2+). The C4-type 2 zinc finger occupies 1749–1785 (CKCGVKQEQRTGVDAVMHFGTLSREDLEIGYTVDCSC). Catalysis depends on for PL2-PRO activity residues His1828 and Asp1842. The Nucleic acid-binding domain occupies 1906–2007 (IKAQFKTFEK…TYFNRPLLVD (102 aa)). One can recognise a G2M domain in the interval 2020–2169 (DDGGDISESD…ADNKVIYTTE (150 aa)). 3 helical membrane passes run 2138-2158 (ISACFNFIKWLFVLLFGWIKI), 2199-2219 (ACIIATIFLLWFNFIYANVIF), and 2227-2247 (IGFLPTFVGKIAQWIKSTFSL). The interval 2138 to 2385 (ISACFNFIKW…ASFIKLFSLF (248 aa)) is HD1. One can recognise a 3Ecto domain in the interval 2235 to 2296 (GKIAQWIKST…AIDVVQYEAD (62 aa)). Intrachain disulfides connect Cys2251–Cys2275 and Cys2266–Cys2272. The next 3 helical transmembrane spans lie at 2313 to 2333 (LIVSYALYTAWFYPLFALISI), 2343 to 2363 (LFMLSTLHWSVRLLVSLANML), and 2365 to 2385 (AHVFMRFYIIIASFIKLFSLF). The segment at 2383–2473 (SLFRHVAYGC…ELKRPIQPTD (91 aa)) is Y1. The CoV Nsp3 Y domain occupies 2383–2750 (SLFRHVAYGC…LTTPFSLKGG (368 aa)). Residues His2387, Cys2392, Cys2397, Cys2400, Cys2433, His2436, Cys2440, and Cys2443 each contribute to the Zn(2+) site. The interval 2387–2400 (HVAYGCSKPGCLFC) is ZF1. The segment at 2433–2443 (CSKHQWNCIDC) is ZF2. A Y2 region spans residues 2474-2566 (VAYHTVTDVK…MVDKNLITTA (93 aa)). The interval 2474–2750 (VAYHTVTDVK…LTTPFSLKGG (277 aa)) is coV-Y. Residues 2567–2649 (NTGTSVTETM…DSVMSAVSAG (83 aa)) form a Y3 region. Residues 2650 to 2750 (LELTDESCNN…LTTPFSLKGG (101 aa)) are Y4. A run of 7 helical transmembrane segments spans residues 2752 to 2772 (VFSYFVYVCFLLSLVCFIGLW), 2824 to 2844 (STFGLSYYSNSMACPIVVAVV), 3009 to 3029 (VFDLIYQLFKGLAQPVDFLAL), 3031 to 3051 (ASSIAGAILAVIVVLVFYYLI), 3063 to 3083 (IVFVNVIVWCVNFMMLFVFQV), 3090 to 3110 (VYAICYFYATLYFPSEISVIM), and 3115 to 3135 (LVMYGTIMPLWFCLLYISVVV). Residues 2752-3135 (VFSYFVYVCF…FCLLYISVVV (384 aa)) are HD2. In terms of domain architecture, Nsp4C spans 3149–3246 (LGTSVRSDGT…TASVSTSFLQ (98 aa)). In terms of domain architecture, Peptidase C30 spans 3247–3549 (SGIVKMVNPT…YQQLAGIKLQ (303 aa)). Active-site for 3CL-PRO activity residues include His3287 and Cys3391. 7 helical membrane-spanning segments follow: residues 3558-3578 (GIVCWIMASTFLFSCIITAFV), 3588-3608 (TNMLSITFCALCVISLAMLLV), 3614-3634 (YLTMYIIPVLFTLLYNNYLVV), 3657-3677 (TYTDEVIYGMLLLIGMVFVTL), 3684-3704 (LFSFIMFVGRVISVVSLWYMG), 3711-3731 (ILLMLASLFGTYTWTTALSMA), and 3755-3775 (IVLVCYLFIGYIISCYWGLFS). The tract at residues 3558 to 3775 (GIVCWIMAST…IISCYWGLFS (218 aa)) is HD3. A RdRp Nsp7 cofactor domain is found at 3837–3925 (SKLTDVKCAN…DYAKDNTVLQ (89 aa)). The 197-residue stretch at 3926 to 4122 (ALQSEFVNMA…HNEVSATVLQ (197 aa)) folds into the RdRp Nsp8 cofactor domain. In terms of domain architecture, Nsp9 ssRNA-binding spans 4123–4232 (NNELMPAKLK…GTISSTVRLQ (110 aa)). Residues 4233–4370 (AGTATEYASN…CVSTDTTVQS (138 aa)) form the ExoN/MTase coactivator domain. Zn(2+) is bound by residues Cys4306, Cys4309, His4315, Cys4322, Cys4348, Cys4351, Cys4359, and Cys4361. 2 zinc fingers span residues 4306–4322 (CIYCRARVEHPDVDGLC) and 4348–4361 (CQVCGFWRDGSCSC). The NiRAN domain occupies 4375-4630 (FLNRVRGTSV…DCELYVNNAY (256 aa)). Asn4578 and Asp4587 together coordinate Mn(2+). The Nsp12 Interface domain occupies 4631 to 4729 (RLFDLVQYDF…MNMDVDTHRY (99 aa)). Positions 4660, 4666, 4671, 4675, and 4852 each coordinate Zn(2+). The 568-residue stretch at 4730-5297 (RLSLKDLLLY…NMYLRSAVMQ (568 aa)) folds into the Nsp12 RNA-dependent RNA polymerase domain. Residues 4732-4946 (SLKDLLLYAA…HQKCLKSIAA (215 aa)) form a rdRp Fingers N-ter region. Positions 4947–4985 (TRGVPVVIGTTKFYGGWDDMLRRLIKDVDNPVLMGWDYP) are rdRp Palm N-ter. The region spanning 4977 to 5139 (PVLMGWDYPK…CYNSDYASKG (163 aa)) is the RdRp catalytic domain. Positions 4986-5044 (KCDRAMPNILRIVSSLVLARKHEACCSQSDRFYRLANECAQVLSEIVMCGGCYYVKPGG) are rdRp Fingers C-ter. Zn(2+) is bound by residues His5007, Cys5010, and Cys5011. The tract at residues 5045–5180 (TSSGDATTAF…NNGPHEFCSQ (136 aa)) is rdRp Palm C-ter. Residues Ser5124, Asp5125, and Asp5126 contribute to the active site. A rdRp Thumb region spans residues 5181-5297 (HTMLVKMDGD…NMYLRSAVMQ (117 aa)). Residues 5298–5410 (SVGACVVCSS…DDFNRIASCK (113 aa)) enclose the CV ZBD domain. Zn(2+) is bound by residues Cys5302, Cys5305, Cys5313, Cys5316, Cys5323, Cys5326, His5330, His5336, Cys5347, Cys5352, Cys5369, and His5372. The (+)RNA virus helicase ATP-binding domain occupies 5553–5734 (SVLETFQNNV…MCCLGPDIFL (182 aa)). Residue 5578–5585 (GPPGTGKS) coordinates ATP. A (+)RNA virus helicase C-terminal domain is found at 5735 to 5904 (GTCYRCPKEI…VETRVQCSTN (170 aa)). In terms of domain architecture, ExoN spans 5971-6186 (LFITKEEAVK…RCLAVYDCFC (216 aa)). Residues Asp5989, Glu5991, and Glu6090 contribute to the active site. Zn(2+) contacts are provided by Cys6106, Cys6109, Cys6125, His6128, His6156, Cys6160, and His6163. Active-site residues include His6167 and Asp6172. Cys6178 contributes to the Zn(2+) binding site. An N7-MTase domain is found at 6195–6421 (YPIISNELSI…NLWNTFTKLQ (227 aa)). 6230 to 6236 (DIGNPKA) lines the S-adenosyl-L-methionine pocket. A gpppA-binding region spans residues 6308 to 6322 (CNGGSLYVNKHAFHT). Positions 6346, 6367, 6378, and 6381 each coordinate Zn(2+). The Nsp15 N-terminal oligomerization domain occupies 6422 to 6482 (SLENVVYNLV…NVAVELFAKR (61 aa)). One can recognise an AV-Nsp11N/CoV-Nsp15M domain in the interval 6483–6603 (SIRHHPELKL…FAVRKEGQDV (121 aa)). A NendoU domain is found at 6653 to 6792 (TCRTDMEKDF…NDEKVMTFYP (140 aa)). Active-site residues include His6683, His6698, Lys6738, Lys6841, Asp6925, Lys6965, and Glu6998. The 295-residue stretch at 6797–7091 (ASDWKPGYSM…KEVFVGDSLV (295 aa)) folds into the Nidovirus-type SAM-dependent 2'-O-MTase domain.

It belongs to the coronaviruses polyprotein 1ab family. Interacts with host PHB and PHB2. In terms of assembly, interacts with papain-like protease nsp3 and non-structural protein 6. As to quaternary structure, monomer. Homodimer. Only the homodimer shows catalytic activity. Interacts with nsp8 and nsp12 to form the replication-transcription complex (RTC): nsp12, nsp7, two subunits of nsp8, and up to two subunits of nsp13. In terms of assembly, interacts with nsp7, nsp13 and nsp12 to form the replication-transcription complex (RTC): nsp12, nsp7, two subunits of nsp8, and up to two subunits of nsp13. As to quaternary structure, interacts with nsp12. Interacts with proofreading exoribonuclease nsp14 and 2'-O-methyltransferase nsp16; these interactions enhance nsp14 and nsp16 enzymatic activities. In terms of assembly, interacts with nsp7 and nsp8 to form the replication-transcription complex (RTC): nsp12, nsp7, two subunits of nsp8, and up to two subunits of nsp13. Interacts with nsp9. As to quaternary structure, interacts with nsp8 to form the replication-transcription complex (RTC): nsp12, nsp7, two subunits of nsp8, and up to two subunits of nsp13. Mn(2+) is required as a cofactor. It depends on Mg(2+) as a cofactor. Post-translationally, specific enzymatic cleavages in vivo by its own proteases yield mature proteins. 3CL-PRO and PL-PRO proteinases are autocatalytically processed.

It is found in the host membrane. The protein resides in the host cytoplasm. Its subcellular location is the host perinuclear region. The protein localises to the host endoplasmic reticulum-Golgi intermediate compartment. It catalyses the reaction RNA(n) + a ribonucleoside 5'-triphosphate = RNA(n+1) + diphosphate. It carries out the reaction ATP + H2O = ADP + phosphate + H(+). The catalysed reaction is Thiol-dependent hydrolysis of ester, thioester, amide, peptide and isopeptide bonds formed by the C-terminal Gly of ubiquitin (a 76-residue protein attached to proteins as an intracellular targeting signal).. The enzyme catalyses a 5'-end (N(7)-methyl 5'-triphosphoguanosine)-ribonucleoside in mRNA + S-adenosyl-L-methionine = a 5'-end (N(7)-methyl 5'-triphosphoguanosine)-(2'-O-methyl-ribonucleoside) in mRNA + S-adenosyl-L-homocysteine + H(+). It catalyses the reaction uridylyl-uridylyl-ribonucleotide-RNA = a 3'-end uridylyl-2',3'-cyclophospho-uridine-RNA + a 5'-end dephospho-ribonucleoside-RNA. It carries out the reaction a 5'-end diphospho-ribonucleoside in mRNA + GTP + H(+) = a 5'-end (5'-triphosphoguanosine)-ribonucleoside in mRNA + diphosphate. The catalysed reaction is a 5'-end (5'-triphosphoguanosine)-ribonucleoside in mRNA + S-adenosyl-L-methionine = a 5'-end (N(7)-methyl 5'-triphosphoguanosine)-ribonucleoside in mRNA + S-adenosyl-L-homocysteine. Functionally, the replicase polyprotein of coronaviruses is a multifunctional protein: it contains the activities necessary for the transcription of negative stranded RNA, leader RNA, subgenomic mRNAs and progeny virion RNA as well as proteinases responsible for the cleavage of the polyprotein into functional products. In terms of biological role, inhibits host translation by interacting with the 40S ribosomal subunit. The nsp1-40S ribosome complex further induces an endonucleolytic cleavage near the 5'UTR of host mRNAs, targeting them for degradation. Viral mRNAs are not susceptible to nsp1-mediated endonucleolytic RNA cleavage thanks to the presence of a 5'-end leader sequence and are therefore protected from degradation. By suppressing host gene expression, nsp1 facilitates efficient viral gene expression in infected cells and evasion from host immune response. Its function is as follows. May play a role in the modulation of host cell survival signaling pathway by interacting with host PHB and PHB2. Indeed, these two proteins play a role in maintaining the functional integrity of the mitochondria and protecting cells from various stresses. Responsible for the cleavages located at the N-terminus of the replicase polyprotein. In addition, PL-PRO possesses a deubiquitinating/deISGylating activity and processes both 'Lys-48'- and 'Lys-63'-linked polyubiquitin chains from cellular substrates. Participates together with nsp4 in the assembly of virally-induced cytoplasmic double-membrane vesicles necessary for viral replication. Antagonizes innate immune induction of type I interferon by blocking the phosphorylation, dimerization and subsequent nuclear translocation of host IRF3. Also prevents host NF-kappa-B signaling. Functionally, participates in the assembly of virally-induced cytoplasmic double-membrane vesicles necessary for viral replication. In terms of biological role, cleaves the C-terminus of replicase polyprotein at 11 sites. Recognizes substrates containing the core sequence [ILMVF]-Q-|-[SGACN]. Also able to bind an ADP-ribose-1''-phosphate (ADRP). Its function is as follows. Plays a role in the initial induction of autophagosomes from host endoplasmic reticulum. Later, limits the expansion of these phagosomes that are no longer able to deliver viral components to lysosomes. Forms a hexadecamer with nsp8 (8 subunits of each) that may participate in viral replication by acting as a primase. Alternatively, may synthesize substantially longer products than oligonucleotide primers. Functionally, forms a hexadecamer with nsp7 (8 subunits of each) that may participate in viral replication by acting as a primase. Alternatively, may synthesize substantially longer products than oligonucleotide primers. In terms of biological role, forms a primer, NSP9-pU, which is utilized by the polymerase for the initiation of RNA chains. Interacts with ribosome signal recognition particle RNA (SRP). Together with NSP8, suppress protein integration into the cell membrane, thereby disrupting host immune defenses. Its function is as follows. Plays a pivotal role in viral transcription by stimulating both nsp14 3'-5' exoribonuclease and nsp16 2'-O-methyltransferase activities. Therefore plays an essential role in viral mRNAs cap methylation. RNA-directed RNA polymerase that catalyzes the transcription of viral genomic and subgenomic RNAs. Acts in complex with nsp7 and nsp8 to transcribe both the minus and positive strands of genomic RNA. The kinase-like NiRAN domain of NSP12 attaches one or more nucleotides to the amino terminus of NSP9, forming a covalent RNA-protein intermediate that serves as transcription/replication primer. Subgenomic RNAs (sgRNAs) are formed by discontinuous transcription: The polymerase has the ability to pause at transcription-regulating sequences (TRS) and jump to the leader TRS, resulting in a major deletion. This creates a series of subgenomic RNAs that are replicated, transcribed and translated. In addition, Nsp12 is a subunit of the viral RNA capping enzyme that catalyzes the RNA guanylyltransferase reaction for genomic and sub-genomic RNAs. Subsequently, the NiRAN domain transfers RNA to GDP, and forms the core cap structure GpppA-RNA. Functionally, multi-functional protein with a zinc-binding domain in N-terminus displaying RNA and DNA duplex-unwinding activities with 5' to 3' polarity. Activity of helicase is dependent on magnesium. In terms of biological role, plays a role in viral RNA synthesis through two distinct activities. The N7-guanine methyltransferase activity plays a role in the formation of the cap structure GpppA-RNA. The proofreading exoribonuclease reduces the sensitivity of the virus to RNA mutagens during replication. This activity acts on both ssRNA and dsRNA in a 3'-5' direction. Its function is as follows. Plays a role in viral transcription/replication and prevents the simultaneous activation of host cell dsRNA sensors, such as MDA5/IFIH1, OAS, and PKR. Acts by degrading the 5'-polyuridines generated during replication of the poly(A) region of viral genomic and subgenomic RNAs. Catalyzes a two-step reaction in which a 2'3'-cyclic phosphate (2'3'-cP) is first generated by 2'-O transesterification, which is then hydrolyzed to a 3'-phosphate (3'-P). If not degraded, poly(U) RNA would hybridize with poly(A) RNA tails and activate host dsRNA sensors. Methyltransferase that mediates mRNA cap 2'-O-ribose methylation to the 5'-cap structure of viral mRNAs. N7-methyl guanosine cap is a prerequisite for binding of nsp16. Therefore plays an essential role in viral mRNAs cap methylation which is essential to evade immune system. The polypeptide is Replicase polyprotein 1ab (rep) (Bos taurus (Bovine)).